Here is a 511-residue protein sequence, read N- to C-terminus: Prolyl 3-hydroxylase OGFOD1 (511 aa).

The interval 1 to 20 (MTGKRGTAAGTDGSGNKKGK) is disordered. The Fe2OG dioxygenase domain maps to 138–240 (KTVDISCAQY…RLSVSGWFHG (103 aa)). The Fe cation site is built by His-156 and Asp-158. Tyr-170 lines the 2-oxoglutarate pocket. His-219 lines the Fe cation pocket. Arg-231 contacts 2-oxoglutarate. Residues 372–403 (NEESDEGEGPSEPNTVSQQGASSEDDKVPSCS) form a disordered region.

The protein belongs to the TPA1 family. As to quaternary structure, monomer. The cofactor is Fe(2+). Requires L-ascorbate as cofactor.

The protein resides in the cytoplasm. It is found in the nucleus. The catalysed reaction is [ribosomal protein uS12]-L-proline + 2-oxoglutarate + O2 = [ribosomal protein uS12]-(3S)-3-hydroxy-L-proline + succinate + CO2. Prolyl 3-hydroxylase that catalyzes 3-hydroxylation of 'Pro-62' of small ribosomal subunit uS12 (rps23), thereby regulating protein translation termination efficiency. Involved in stress granule formation. The chain is Prolyl 3-hydroxylase OGFOD1 (ogfod1) from Xenopus laevis (African clawed frog).